The sequence spans 445 residues: Gamma-glutamyl phosphate reductase (445 aa).

This sequence belongs to the gamma-glutamyl phosphate reductase family.

It is found in the cytoplasm. The enzyme catalyses L-glutamate 5-semialdehyde + phosphate + NADP(+) = L-glutamyl 5-phosphate + NADPH + H(+). Its pathway is amino-acid biosynthesis; L-proline biosynthesis; L-glutamate 5-semialdehyde from L-glutamate: step 2/2. In terms of biological role, catalyzes the NADPH-dependent reduction of L-glutamate 5-phosphate into L-glutamate 5-semialdehyde and phosphate. The product spontaneously undergoes cyclization to form 1-pyrroline-5-carboxylate. The protein is Gamma-glutamyl phosphate reductase of Synechococcus sp. (strain RCC307).